Consider the following 301-residue polypeptide: Rhodopsin (301 aa).

Residues 1–18 (LHMIHLHWYQYPPMNPMM) lie on the Extracellular side of the membrane. A helical transmembrane segment spans residues 19–43 (YPLLLIFMLFTGILCLAGNFVTIWV). At 44-55 (FMNTKSLRTPAN) the chain is on the cytoplasmic side. The helical transmembrane segment at 56-78 (LLVVNLAMSDFLMMFTMFPPMMV) threads the bilayer. Over 79–92 (TCYYHTWTLGPTFC) the chain is Extracellular. Cysteine 92 and cysteine 169 are joined by a disulfide. The helical transmembrane segment at 93 to 115 (QVYAFLGNLCGCASIWTMVFITF) threads the bilayer. Residues 116 to 118 (DRY) carry the 'Ionic lock' involved in activated form stabilization motif. Residues 116–134 (DRYNVIVKGVAGEPLSNKK) lie on the Cytoplasmic side of the membrane. Residues 135-155 (AAMWILSVWVLSTAWCMAPFF) traverse the membrane as a helical segment. Topologically, residues 156–182 (GWNSYVPEGNLTGCGTDYLSEDILSRS) are extracellular. Asparagine 165 is a glycosylation site (N-linked (GlcNAc...) asparagine). Residues 183 to 204 (YLYIYSTWVYFLPLTITIYCYV) traverse the membrane as a helical segment. The Cytoplasmic segment spans residues 205–245 (FIIKAVAAHEKGMRDQAKKMGIKSLRNEEAQKTSAECRLAK). The chain crosses the membrane as a helical span at residues 246 to 267 (IAMTTVALWFIAWTPYLLINWV). Residues 268–278 (GMFARSYLSPV) lie on the Extracellular side of the membrane. The chain crosses the membrane as a helical span at residues 279–300 (YTIWGYVFAKANAVYNPIVYAI). At lysine 288 the chain carries N6-(retinylidene)lysine.

Belongs to the G-protein coupled receptor 1 family. Opsin subfamily. As to quaternary structure, homodimer. Interacts with GNAQ. Post-translationally, contains one covalently linked retinal chromophore.

Its subcellular location is the cell projection. It localises to the rhabdomere membrane. Photoreceptor required for image-forming vision at low light intensity. Can use both retinal and 3-dehydroretinal as visual pigment. Light-induced isomerization of 11-cis to all-trans retinal triggers a conformational change that activates signaling via G-proteins. Signaling via GNAQ probably mediates the activation of phospholipase C. The sequence is that of Rhodopsin (RHO) from Faxonius virilis (Virile crayfish).